A 388-amino-acid polypeptide reads, in one-letter code: UPF0229 protein BH1031 (388 aa).

The interval 80–117 is disordered; that stretch reads HVGQGDGDSQVGDVIARDPSAGQQGPGKGQGAGDQPGE. Positions 103 to 113 are enriched in gly residues; sequence QGPGKGQGAGD.

Belongs to the UPF0229 family.

In Halalkalibacterium halodurans (strain ATCC BAA-125 / DSM 18197 / FERM 7344 / JCM 9153 / C-125) (Bacillus halodurans), this protein is UPF0229 protein BH1031.